A 456-amino-acid polypeptide reads, in one-letter code: MVSSRPRRRKRASATQLYQTCKAAGTCPPDVVNKVEQTTVADQILKWGSMGVFFGGLGIGSGSGSGGRAGYVPLSTGSRAIPPKSLAPDVIARPPVVVDTVAPTDPSIVSLIEESSIIQSGAPSPVIPTEGGFSITSSGTDVPAILDISSTNTVHVTSTTHHNPIFTDPSVVQPIPPVEASGRIIVSHSSITTGAAEEIPMDTFVVHSDPLSSTPVPGVSARPKVGLYSKALQQVEIVDPTFMSTPQRLITYDNPVFDNIEDTLHFEQPSIHNAPDPAFMDIITLHRPALTSRRGVVRFSRVGQRGTMYTRRGTRIGGRVHFFKDISPIASSEEIELHPLVASPNNSDLFDVYADIDDIDENILYSTIDNNTPTSTYSLYPGNSTRIANTSIPLATIPDTFLTSGPDIVFPSVPAGTPYLPVSPSIPAISVLIRGTDYYLNPAYYFRKRRKRILAY.

Residues 1 to 12 (MVSSRPRRRKRA) carry the Nuclear localization signal motif. Cys21 and Cys27 are oxidised to a cystine. Positions 446–454 (FRKRRKRIL) match the Nuclear localization signal motif.

The protein belongs to the papillomaviridae L2 protein family. In terms of assembly, interacts with major capsid protein L1. Interacts with E2; this interaction inhibits E2 transcriptional activity but not the DNA replication function E2. Interacts with host GADD45GIP1. Interacts with host HSPA8; this interaction is required for L2 nuclear translocation. Interacts with host importins KPNB2 and KPNB3. Forms a complex with importin alpha2-beta1 heterodimers via interaction with the importin alpha2 adapter. Interacts with host DYNLT1; this interaction is essential for virus intracellular transport during entry. Interacts (via C-terminus) with host retromer subunits VPS35 and VPS29. Post-translationally, highly phosphorylated.

The protein localises to the virion. It localises to the host nucleus. The protein resides in the host early endosome. Its subcellular location is the host Golgi apparatus. Its function is as follows. Minor protein of the capsid that localizes along the inner surface of the virion, within the central cavities beneath the L1 pentamers. Plays a role in capsid stabilization through interaction with the major capsid protein L1. Once the virion enters the host cell, L2 escorts the genomic DNA into the nucleus by promoting escape from the endosomal compartments and traffic through the host Golgi network. Mechanistically, the C-terminus of L2 possesses a cell-penetrating peptide that protudes from the host endosome, interacts with host cytoplasmic retromer cargo and thereby mediates the capsid delivery to the host trans-Golgi network. Plays a role through its interaction with host dynein in the intracellular microtubule-dependent transport of viral capsid toward the nucleus. Mediates the viral genome import into the nucleus through binding to host importins. Once within the nucleus, L2 localizes viral genomes to host PML bodies in order to activate early gene expression for establishment of infection. Later on, promotes late gene expression by interacting with the viral E2 protein and by inhibiting its transcriptional activation functions. During virion assembly, encapsidates the genome by direct interaction with the viral DNA. In Homo sapiens (Human), this protein is Minor capsid protein L2.